The chain runs to 432 residues: Protein ABHD8 (432 aa).

2 disordered regions span residues 47-69 and 121-149; these read KHAG…QGDQ and PAGS…RPKR. A compositionally biased stretch (pro residues) spans 52 to 61; it reads APAPTPPPPL. Residues 139–149 are compositionally biased toward basic residues; the sequence is GRRRRARRPKR. In terms of domain architecture, AB hydrolase-1 spans 170–272; the sequence is VLFFIHGVGG…HKVIMINGGG (103 aa). Residues S245, D363, and H391 each act as charge relay system in the active site.

Belongs to the AB hydrolase superfamily. Interacts with NLRP3 (via NACHT and LLR domains); this interaction is enhanced in the presence of NLRP3 inflammasome inducers, such as ATP, nigericin, silica, or alum. Interacts with ZDHHC12.

The protein resides in the cytoplasm. Functionally, negatively regulates NLRP3-driven inflammation. Promotes NLRP3 degradation through the chaperone-mediated autophagy (CMA) pathway, hence attenuating inflammasome activation and IL1B secretion. Acts by recruiting palmitoyltransferase ZDHHC12 to NLRP3, facilitating NLRP3 palmitoylation and subsequent degradation. This chain is Protein ABHD8, found in Bos taurus (Bovine).